We begin with the raw amino-acid sequence, 831 residues long: Probable glucan 1,3-beta-glucosidase D (831 aa).

Composition is skewed to basic and acidic residues over residues 1-24, 44-56, 79-93, 102-115, 137-151, and 198-213; these read MPSHSRSRDRYRSERDPSRRYREV, RRDDYQHDIRSHE, RSHDVEGRRRERSRA, SRRDRNRGGEEYRR, RDGQRARPRDMDREA, and QRERSQEQEQPRMESK. 2 disordered regions span residues 1–179 and 192–241; these read MPSH…SGSH and HYDE…GQSK. The Cytoplasmic segment spans residues 1 to 297; it reads MPSHSRSRDR…AQPPFWKRKK (297 aa). The chain crosses the membrane as a helical; Signal-anchor for type II membrane protein span at residues 298 to 318; the sequence is WWIVIGVLVVVLAIVIPVAVV. Topologically, residues 319-831 are extracellular; the sequence is MSKKHGHDDD…PSFGDLPEYY (513 aa). N-linked (GlcNAc...) asparagine glycosylation is found at N376, N381, N393, N410, N442, N546, and N558. E597 serves as the catalytic Proton donor. N-linked (GlcNAc...) asparagine glycosylation is found at N610, N636, N669, and N689. E702 serves as the catalytic Nucleophile.

The protein belongs to the glycosyl hydrolase 5 (cellulase A) family.

The protein resides in the cell membrane. The enzyme catalyses Successive hydrolysis of beta-D-glucose units from the non-reducing ends of (1-&gt;3)-beta-D-glucans, releasing alpha-glucose.. Its function is as follows. Glucosidase involved in the degradation of cellulosic biomass. Active on lichenan. The protein is Probable glucan 1,3-beta-glucosidase D (exgD) of Aspergillus oryzae (strain ATCC 42149 / RIB 40) (Yellow koji mold).